Consider the following 251-residue polypeptide: Triosephosphate isomerase (251 aa).

9–11 (NWK) is a binding site for substrate. H95 functions as the Electrophile in the catalytic mechanism. The Proton acceptor role is filled by E167. Substrate contacts are provided by residues G173, S212, and 233–234 (GG).

This sequence belongs to the triosephosphate isomerase family. In terms of assembly, homodimer.

It localises to the cytoplasm. The catalysed reaction is D-glyceraldehyde 3-phosphate = dihydroxyacetone phosphate. It functions in the pathway carbohydrate biosynthesis; gluconeogenesis. Its pathway is carbohydrate degradation; glycolysis; D-glyceraldehyde 3-phosphate from glycerone phosphate: step 1/1. In terms of biological role, involved in the gluconeogenesis. Catalyzes stereospecifically the conversion of dihydroxyacetone phosphate (DHAP) to D-glyceraldehyde-3-phosphate (G3P). The chain is Triosephosphate isomerase from Pseudomonas aeruginosa (strain LESB58).